Consider the following 166-residue polypeptide: MRVDTSELCDIYSDQVDVVEPIFSSFGGLSSFYGKITTVKCFESNGLIAEVLEEEGQGRVLLVDGGGVVRRALIDAELAQLAVDNGWEGIIVNGAVRQLDVLETLDIGIQALAPIPVGADDSMVGEVDTPVNFGGVTFLPEDYVYADLTGIVLSPELLDLQSEDIE.

Belongs to the RraA family. Homotrimer. Binds to both RNA-binding sites in the C-terminal region of Rne and to RhlB.

It localises to the cytoplasm. In terms of biological role, globally modulates RNA abundance by binding to RNase E (Rne) and regulating its endonucleolytic activity. Can modulate Rne action in a substrate-dependent manner by altering the composition of the degradosome. Modulates RNA-binding and helicase activities of the degradosome. In Glaesserella parasuis serovar 5 (strain SH0165) (Haemophilus parasuis), this protein is Regulator of ribonuclease activity A.